Here is a 201-residue protein sequence, read N- to C-terminus: Probable thymidylate kinase (201 aa).

10–17 lines the ATP pocket; it reads GIDGSGKS.

Belongs to the thymidylate kinase family.

It carries out the reaction dTMP + ATP = dTDP + ADP. The polypeptide is Probable thymidylate kinase (Methanococcoides burtonii (strain DSM 6242 / NBRC 107633 / OCM 468 / ACE-M)).